The primary structure comprises 529 residues: uncharacterized protein (529 aa).

2 consecutive ABC transporter domains span residues 6–257 (LAIE…QKLL) and 287–526 (IRKG…RQLL). ATP-binding positions include 42–49 (GESGSGKS) and 319–326 (GESGSGKS).

Belongs to the ABC transporter superfamily.

This is an uncharacterized protein from Escherichia coli (strain K12).